The chain runs to 343 residues: UDP-3-O-acylglucosamine N-acyltransferase 2 (343 aa).

The active-site Proton acceptor is the histidine 251.

Belongs to the transferase hexapeptide repeat family. LpxD subfamily. As to quaternary structure, homotrimer.

The enzyme catalyses a UDP-3-O-[(3R)-3-hydroxyacyl]-alpha-D-glucosamine + a (3R)-hydroxyacyl-[ACP] = a UDP-2-N,3-O-bis[(3R)-3-hydroxyacyl]-alpha-D-glucosamine + holo-[ACP] + H(+). The protein operates within bacterial outer membrane biogenesis; LPS lipid A biosynthesis. Catalyzes the N-acylation of UDP-3-O-acylglucosamine using 3-hydroxyacyl-ACP as the acyl donor. Is involved in the biosynthesis of lipid A, a phosphorylated glycolipid that anchors the lipopolysaccharide to the outer membrane of the cell. This Legionella pneumophila (strain Paris) protein is UDP-3-O-acylglucosamine N-acyltransferase 2.